The chain runs to 207 residues: Varv peptide A/Kalata-B1 (207 aa).

An N-terminal signal peptide occupies residues Met1–Ala20. Positions Thr21–Gly66 are excised as a propeptide. Residues Gly67–Asn95 constitute a cross-link (cyclopeptide (Gly-Asn)). Intrachain disulfides connect Cys71–Cys85, Cys75–Cys87, and Cys80–Cys92. The propeptide occupies Ser96 to Gly120. A cross-link (cyclopeptide (Gly-Asn)) is located at residues Gly121–Asn149. Disulfide bonds link Cys125–Cys139, Cys129–Cys141, and Cys134–Cys146. Positions Ala150–Gly174 are excised as a propeptide. The cyclopeptide (Gly-Asn) cross-link spans Gly175 to Asn203. 3 disulfides stabilise this stretch: Cys179–Cys193, Cys183–Cys195, and Cys188–Cys200. Residues Ala204 to Met207 constitute a propeptide that is removed on maturation.

The protein belongs to the cyclotide family. Moebius subfamily. Post-translationally, varv peptide A and kalata-B1 are cyclic peptides.

Functionally, probably participates in a plant defense mechanism. Has hemolytic activity. This Viola odorata (Sweet violet) protein is Varv peptide A/Kalata-B1.